The primary structure comprises 455 residues: MSPVSPRSLTLIGAGLAGCLLAILLSRRGWQITVYERRGDPRIKGYECGRSINLALAERGRHALRQAGAEELVMAKAVMMRGRMVHPLVGEPQLQRYGRDDSEVIWSIHRAALNVALLDLAEQAGARVHFYRRLHTVDFDAGYARFIDDRDDQPHEIHFQSLIGSDGAGSALRAAMQRKSPLGERTEFLDHSYKELEIPPLPGGGFRIEGNALHIWPRGRYMFIALPNDGGTFTVTLFLPNAGEPSFATTRNGDEAFALFARDFPDALPLIPQLKQHWEEHPPGLLGTLTLDRWHLDGRALLIGDAAHAMVPFHGQGMNCAFEDCVALADQLDAHDDLASAFAAFEAARRDDAGAIQQMALENYLEMRDRVDDPEFLLQRQLEQQLQARWPTRFVPHYTMVTFLRTRYSIALARSEIQREILVEATRGHSDLSRLDWAALETIVHARLEPLDGAH.

This sequence belongs to the aromatic-ring hydroxylase family. KMO subfamily. Requires FAD as cofactor.

The catalysed reaction is L-kynurenine + NADPH + O2 + H(+) = 3-hydroxy-L-kynurenine + NADP(+) + H2O. Its pathway is cofactor biosynthesis; NAD(+) biosynthesis; quinolinate from L-kynurenine: step 1/3. In terms of biological role, catalyzes the hydroxylation of L-kynurenine (L-Kyn) to form 3-hydroxy-L-kynurenine (L-3OHKyn). Required for synthesis of quinolinic acid. This Xanthomonas oryzae pv. oryzae (strain MAFF 311018) protein is Kynurenine 3-monooxygenase.